The sequence spans 358 residues: Protein RecA (358 aa).

67-74 is an ATP binding site; that stretch reads GPESSGKT.

This sequence belongs to the RecA family.

It localises to the cytoplasm. Its function is as follows. Can catalyze the hydrolysis of ATP in the presence of single-stranded DNA, the ATP-dependent uptake of single-stranded DNA by duplex DNA, and the ATP-dependent hybridization of homologous single-stranded DNAs. It interacts with LexA causing its activation and leading to its autocatalytic cleavage. In Xenorhabdus bovienii (Xenorhabdus nematophila subsp. bovienii), this protein is Protein RecA.